We begin with the raw amino-acid sequence, 707 residues long: Dendrin (707 aa).

5 disordered regions span residues 1–22 (MLDG…DEES), 67–86 (QNRT…RRPW), 94–195 (ATNW…PWGG), 213–273 (AGTA…KKRL), and 342–377 (TEVA…GSEE). Positions 103 to 134 (AEVRAREQEKRKAASQEREAKETERKRRKAGG) form a coiled coil. The segment covering 105-127 (VRAREQEKRKAASQEREAKETER) has biased composition (basic and acidic residues). Residues 113-131 (RKAASQEREAKETERKRRK) form a nuclear localization region. The segment at 186 to 236 (GVAWAGPWGGRRPGPPSYEAHLLLRGAAGTAPRRRWDRPPPYVAPPSYEGP) is interaction with MAGI2. The segment at 340–434 (PVTEVALSGS…LEVWKVTRRA (95 aa)) is interaction with ACTN1. Over residues 359 to 369 (PRSRQHLRGSR) the composition is skewed to basic residues. S387 bears the Phosphoserine mark. Disordered regions lie at residues 389–421 (KKPP…EGTE) and 517–707 (RVLN…GKRE). The interaction with CD2AP and NPHS1 stretch occupies residues 406–707 (GGTGWKESLG…TRKTPQGKRE (302 aa)). Composition is skewed to basic and acidic residues over residues 524 to 544 (EGRE…EERS) and 692 to 707 (GLVR…GKRE).

As to quaternary structure, forms a ternary complex with MAGI2 and SH3KBP1; recruits DDN to the cytoplasm. Interacts with MAGI1. Interacts with ACTN1 and may interact with WWC1. Interacts with the podocyte slit diaphragm proteins CD2AP, NPHS1 and NPHS2; the interaction with CD2AP and NPHS1 is direct. As to expression, specifically expressed in forebrain structures, particularly in neocortex, olfactory bulb, hippocampus, caudate-putamen, and limbic system (at protein level). Also detected in spleen, liver, kidney and placenta (at protein level).

The protein resides in the cell projection. It is found in the dendritic spine membrane. It localises to the cytoplasm. Its subcellular location is the endoplasmic reticulum membrane. The protein localises to the perikaryon. The protein resides in the nucleus. Promotes apoptosis of kidney glomerular podocytes. Podocytes are highly specialized cells essential to the ultrafiltration of blood, resulting in the extraction of urine and the retention of protein. In Rattus norvegicus (Rat), this protein is Dendrin (Ddn).